A 467-amino-acid chain; its full sequence is tRNA(Ile)-lysidine synthase (467 aa).

35 to 40 lines the ATP pocket; sequence SGGPDS.

It belongs to the tRNA(Ile)-lysidine synthase family.

The protein localises to the cytoplasm. The catalysed reaction is cytidine(34) in tRNA(Ile2) + L-lysine + ATP = lysidine(34) in tRNA(Ile2) + AMP + diphosphate + H(+). Ligates lysine onto the cytidine present at position 34 of the AUA codon-specific tRNA(Ile) that contains the anticodon CAU, in an ATP-dependent manner. Cytidine is converted to lysidine, thus changing the amino acid specificity of the tRNA from methionine to isoleucine. The sequence is that of tRNA(Ile)-lysidine synthase from Caldanaerobacter subterraneus subsp. tengcongensis (strain DSM 15242 / JCM 11007 / NBRC 100824 / MB4) (Thermoanaerobacter tengcongensis).